The sequence spans 234 residues: ATP-dependent dethiobiotin synthetase BioD (234 aa).

12–17 is an ATP binding site; the sequence is DVGKTI. Mg(2+) is bound at residue Thr16. Residue Lys37 is part of the active site. Residue Thr41 coordinates substrate. ATP is bound by residues Asp54 and 115-118; that span reads EGAG. Mg(2+) contacts are provided by Asp54 and Glu115.

The protein belongs to the dethiobiotin synthetase family. As to quaternary structure, homodimer. Mg(2+) is required as a cofactor.

It localises to the cytoplasm. The catalysed reaction is (7R,8S)-7,8-diammoniononanoate + CO2 + ATP = (4R,5S)-dethiobiotin + ADP + phosphate + 3 H(+). Its pathway is cofactor biosynthesis; biotin biosynthesis; biotin from 7,8-diaminononanoate: step 1/2. In terms of biological role, catalyzes a mechanistically unusual reaction, the ATP-dependent insertion of CO2 between the N7 and N8 nitrogen atoms of 7,8-diaminopelargonic acid (DAPA, also called 7,8-diammoniononanoate) to form a ureido ring. This chain is ATP-dependent dethiobiotin synthetase BioD, found in Lysinibacillus sphaericus (strain C3-41).